The chain runs to 240 residues: Phosphatidylserine decarboxylase proenzyme (240 aa).

The active-site Schiff-base intermediate with substrate; via pyruvic acid is serine 198. Serine 198 is modified (pyruvic acid (Ser); by autocatalysis).

This sequence belongs to the phosphatidylserine decarboxylase family. PSD-A subfamily. In terms of assembly, heterodimer of a large membrane-associated beta subunit and a small pyruvoyl-containing alpha subunit. Pyruvate is required as a cofactor. Post-translationally, is synthesized initially as an inactive proenzyme. Formation of the active enzyme involves a self-maturation process in which the active site pyruvoyl group is generated from an internal serine residue via an autocatalytic post-translational modification. Two non-identical subunits are generated from the proenzyme in this reaction, and the pyruvate is formed at the N-terminus of the alpha chain, which is derived from the carboxyl end of the proenzyme. The post-translation cleavage follows an unusual pathway, termed non-hydrolytic serinolysis, in which the side chain hydroxyl group of the serine supplies its oxygen atom to form the C-terminus of the beta chain, while the remainder of the serine residue undergoes an oxidative deamination to produce ammonia and the pyruvoyl prosthetic group on the alpha chain.

It localises to the cell membrane. It carries out the reaction a 1,2-diacyl-sn-glycero-3-phospho-L-serine + H(+) = a 1,2-diacyl-sn-glycero-3-phosphoethanolamine + CO2. It participates in phospholipid metabolism; phosphatidylethanolamine biosynthesis; phosphatidylethanolamine from CDP-diacylglycerol: step 2/2. Functionally, catalyzes the formation of phosphatidylethanolamine (PtdEtn) from phosphatidylserine (PtdSer). This Paramagnetospirillum magneticum (strain ATCC 700264 / AMB-1) (Magnetospirillum magneticum) protein is Phosphatidylserine decarboxylase proenzyme.